The chain runs to 179 residues: ATP synthase subunit delta (179 aa).

It belongs to the ATPase delta chain family. F-type ATPases have 2 components, F(1) - the catalytic core - and F(0) - the membrane proton channel. F(1) has five subunits: alpha(3), beta(3), gamma(1), delta(1), epsilon(1). F(0) has three main subunits: a(1), b(2) and c(10-14). The alpha and beta chains form an alternating ring which encloses part of the gamma chain. F(1) is attached to F(0) by a central stalk formed by the gamma and epsilon chains, while a peripheral stalk is formed by the delta and b chains.

The protein resides in the cell inner membrane. Functionally, f(1)F(0) ATP synthase produces ATP from ADP in the presence of a proton or sodium gradient. F-type ATPases consist of two structural domains, F(1) containing the extramembraneous catalytic core and F(0) containing the membrane proton channel, linked together by a central stalk and a peripheral stalk. During catalysis, ATP synthesis in the catalytic domain of F(1) is coupled via a rotary mechanism of the central stalk subunits to proton translocation. In terms of biological role, this protein is part of the stalk that links CF(0) to CF(1). It either transmits conformational changes from CF(0) to CF(1) or is implicated in proton conduction. This Burkholderia orbicola (strain MC0-3) protein is ATP synthase subunit delta.